Reading from the N-terminus, the 135-residue chain is Holo-[acyl-carrier-protein] synthase (135 aa).

The Mg(2+) site is built by aspartate 8 and glutamate 58.

The protein belongs to the P-Pant transferase superfamily. AcpS family. Requires Mg(2+) as cofactor.

It localises to the cytoplasm. The catalysed reaction is apo-[ACP] + CoA = holo-[ACP] + adenosine 3',5'-bisphosphate + H(+). In terms of biological role, transfers the 4'-phosphopantetheine moiety from coenzyme A to a Ser of acyl-carrier-protein. This Ligilactobacillus salivarius (strain UCC118) (Lactobacillus salivarius) protein is Holo-[acyl-carrier-protein] synthase.